The following is a 327-amino-acid chain: Lipoyl synthase (327 aa).

[4Fe-4S] cluster-binding residues include Cys-74, Cys-79, Cys-85, Cys-100, Cys-104, Cys-107, and Ser-314. Positions 86-303 (FSGGTATFMI…AEEGERMGFK (218 aa)) constitute a Radical SAM core domain.

Belongs to the radical SAM superfamily. Lipoyl synthase family. [4Fe-4S] cluster serves as cofactor.

The protein localises to the cytoplasm. It carries out the reaction [[Fe-S] cluster scaffold protein carrying a second [4Fe-4S](2+) cluster] + N(6)-octanoyl-L-lysyl-[protein] + 2 oxidized [2Fe-2S]-[ferredoxin] + 2 S-adenosyl-L-methionine + 4 H(+) = [[Fe-S] cluster scaffold protein] + N(6)-[(R)-dihydrolipoyl]-L-lysyl-[protein] + 4 Fe(3+) + 2 hydrogen sulfide + 2 5'-deoxyadenosine + 2 L-methionine + 2 reduced [2Fe-2S]-[ferredoxin]. Its pathway is protein modification; protein lipoylation via endogenous pathway; protein N(6)-(lipoyl)lysine from octanoyl-[acyl-carrier-protein]: step 2/2. Its function is as follows. Catalyzes the radical-mediated insertion of two sulfur atoms into the C-6 and C-8 positions of the octanoyl moiety bound to the lipoyl domains of lipoate-dependent enzymes, thereby converting the octanoylated domains into lipoylated derivatives. The chain is Lipoyl synthase from Pseudomonas paraeruginosa (strain DSM 24068 / PA7) (Pseudomonas aeruginosa (strain PA7)).